A 153-amino-acid chain; its full sequence is Myosin regulatory light chain, smooth muscle (153 aa).

EF-hand domains follow at residues 12–47, 81–116, and 117–152; these read SQIQ…LGRG, DPEE…QADR, and FSQS…GQEE. Ca(2+) contacts are provided by Asp25, Asn27, Asp29, and Asp36.

Functionally, in molluscan muscle, calcium regulation is associated with myosin rather than with actin. Muscle myosin contains two types of light chains: the catalytic light chain, essential for ATPase activity, and the regulatory light chain, a calcium-binding protein responsible for Ca(2+) dependent binding and Ca(2+) dependent Mg-ATPase activity. The chain is Myosin regulatory light chain, smooth muscle from Halocynthia roretzi (Sea squirt).